Consider the following 387-residue polypeptide: Homoserine O-succinyltransferase (387 aa).

Residues 49–358 (NAILICHALS…DAEQGHDSFL (310 aa)) enclose the AB hydrolase-1 domain. The Nucleophile role is filled by S156. R226 contacts substrate. Active-site residues include D321 and H354. D355 contributes to the substrate binding site.

Belongs to the AB hydrolase superfamily. MetX family. As to quaternary structure, homodimer.

It is found in the cytoplasm. The enzyme catalyses L-homoserine + succinyl-CoA = O-succinyl-L-homoserine + CoA. It participates in amino-acid biosynthesis; L-methionine biosynthesis via de novo pathway; O-succinyl-L-homoserine from L-homoserine: step 1/1. With respect to regulation, requires MetW for activity. Its function is as follows. Transfers a succinyl group from succinyl-CoA to L-homoserine, forming succinyl-L-homoserine. The protein is Homoserine O-succinyltransferase of Acinetobacter baylyi (strain ATCC 33305 / BD413 / ADP1).